A 647-amino-acid polypeptide reads, in one-letter code: Threonine--tRNA ligase (647 aa).

The region spanning 1–61 is the TGS domain; sequence MIKITFPDGA…EEDGSIEIVT (61 aa). Positions 240–538 are catalytic; that stretch reads DHRKLGKELD…LIETYKGAFP (299 aa). The Zn(2+) site is built by cysteine 334, histidine 385, and histidine 515.

This sequence belongs to the class-II aminoacyl-tRNA synthetase family. As to quaternary structure, homodimer. Zn(2+) serves as cofactor.

It is found in the cytoplasm. The enzyme catalyses tRNA(Thr) + L-threonine + ATP = L-threonyl-tRNA(Thr) + AMP + diphosphate + H(+). In terms of biological role, catalyzes the attachment of threonine to tRNA(Thr) in a two-step reaction: L-threonine is first activated by ATP to form Thr-AMP and then transferred to the acceptor end of tRNA(Thr). Also edits incorrectly charged L-seryl-tRNA(Thr). This is Threonine--tRNA ligase from Streptococcus agalactiae serotype V (strain ATCC BAA-611 / 2603 V/R).